The chain runs to 642 residues: Polyglycine hydrolase (642 aa).

The first 23 residues, 1-23 (MYTSRLLLSNLASCLSLATLVAS), serve as a signal peptide directing secretion. N37, N100, N159, and N341 each carry an N-linked (GlcNAc...) asparagine glycan. The cysteines at positions 149 and 183 are disulfide-linked. The active site involves S370. N390, N407, N444, N487, and N494 each carry an N-linked (GlcNAc...) asparagine glycan.

This sequence belongs to the peptidase S12 family.

Its subcellular location is the secreted. It catalyses the reaction a glycyl-glycyl-[protein] + H2O = N-terminal glycyl-[protein] + [protein]-C-terminal glycine. Its activity is regulated as follows. Not inhibited by phenylmethylsulfonyl fluoride (PMSF; serine peptidase class S1 inhibitor), clavulanic acid (beta-lactamase inhibitor) or ampicillin (penicillin-binding protein (PBP) inhibitor). In terms of biological role, serine-type endopeptidase that cleaves Gly-Gly bonds in the polyglycine linker of host plant class IV chitinases to disrupt their chitin-binding, and thereby plays a role in lowering the defense responses of the host to the fungus. Degrades Z.mays Endochitinase A (CHIA). Degrades Z.mays Endochitinase B (CHIB). Has no activity on Z.mays CHIA following CHIA cleavage by fungalysin. The chain is Polyglycine hydrolase from Epicoccum sorghinum (Endophyte fungus).